Reading from the N-terminus, the 156-residue chain is ATP synthase subunit b (156 aa).

The chain crosses the membrane as a helical span at residues 12-32; it reads VAFLIFVLFCMKYVWPPVITA.

The protein belongs to the ATPase B chain family. F-type ATPases have 2 components, F(1) - the catalytic core - and F(0) - the membrane proton channel. F(1) has five subunits: alpha(3), beta(3), gamma(1), delta(1), epsilon(1). F(0) has three main subunits: a(1), b(2) and c(10-14). The alpha and beta chains form an alternating ring which encloses part of the gamma chain. F(1) is attached to F(0) by a central stalk formed by the gamma and epsilon chains, while a peripheral stalk is formed by the delta and b chains.

It localises to the cell inner membrane. Its function is as follows. F(1)F(0) ATP synthase produces ATP from ADP in the presence of a proton or sodium gradient. F-type ATPases consist of two structural domains, F(1) containing the extramembraneous catalytic core and F(0) containing the membrane proton channel, linked together by a central stalk and a peripheral stalk. During catalysis, ATP synthesis in the catalytic domain of F(1) is coupled via a rotary mechanism of the central stalk subunits to proton translocation. Component of the F(0) channel, it forms part of the peripheral stalk, linking F(1) to F(0). The protein is ATP synthase subunit b of Pseudomonas putida (strain GB-1).